Here is a 301-residue protein sequence, read N- to C-terminus: UPF0282 protein Pcal_1546 (301 aa).

Belongs to the UPF0282 family.

The polypeptide is UPF0282 protein Pcal_1546 (Pyrobaculum calidifontis (strain DSM 21063 / JCM 11548 / VA1)).